The sequence spans 194 residues: 7-methyl-GTP pyrophosphatase (194 aa).

Catalysis depends on D69, which acts as the Proton acceptor.

Belongs to the Maf family. YceF subfamily. The cofactor is a divalent metal cation.

The protein localises to the cytoplasm. It carries out the reaction N(7)-methyl-GTP + H2O = N(7)-methyl-GMP + diphosphate + H(+). Functionally, nucleoside triphosphate pyrophosphatase that hydrolyzes 7-methyl-GTP (m(7)GTP). May have a dual role in cell division arrest and in preventing the incorporation of modified nucleotides into cellular nucleic acids. The protein is 7-methyl-GTP pyrophosphatase (yceF1) of Salmonella paratyphi A (strain ATCC 9150 / SARB42).